A 255-amino-acid chain; its full sequence is Borealin-2 (255 aa).

Disordered stretches follow at residues 1-24 (MAPR…HSFE) and 107-156 (IQKP…STGS). The span at 124-135 (AGQQRSSSQSKT) shows a compositional bias: polar residues.

This sequence belongs to the borealin family. Component of the CPC complex.

The protein localises to the nucleus. It is found in the chromosome. The protein resides in the centromere. Component of the chromosomal passenger complex (CPC), a complex that acts as a key regulator of mitosis. The CPC complex has essential functions at the centromere in ensuring correct chromosome alignment and segregation and is required for chromatin-induced microtubule stabilization and spindle assembly. This chain is Borealin-2 (cdca9), found in Danio rerio (Zebrafish).